Consider the following 301-residue polypeptide: tRNA-cytidine(32) 2-sulfurtransferase (301 aa).

Positions 55-60 match the PP-loop motif motif; that stretch reads SGGKDS. Positions 130, 133, and 221 each coordinate [4Fe-4S] cluster.

This sequence belongs to the TtcA family. In terms of assembly, homodimer. It depends on Mg(2+) as a cofactor. [4Fe-4S] cluster is required as a cofactor.

It is found in the cytoplasm. The catalysed reaction is cytidine(32) in tRNA + S-sulfanyl-L-cysteinyl-[cysteine desulfurase] + AH2 + ATP = 2-thiocytidine(32) in tRNA + L-cysteinyl-[cysteine desulfurase] + A + AMP + diphosphate + H(+). Its pathway is tRNA modification. In terms of biological role, catalyzes the ATP-dependent 2-thiolation of cytidine in position 32 of tRNA, to form 2-thiocytidine (s(2)C32). The sulfur atoms are provided by the cysteine/cysteine desulfurase (IscS) system. In Acinetobacter baylyi (strain ATCC 33305 / BD413 / ADP1), this protein is tRNA-cytidine(32) 2-sulfurtransferase.